Here is a 96-residue protein sequence, read N- to C-terminus: Myoglobin (96 aa).

The Globin domain maps to 1–96 (GLSDGEWQLV…AKTKELGFLG (96 aa)). Ser-3 carries the post-translational modification Phosphoserine. Nitrite is bound at residue His-61. His-61 serves as a coordination point for O2. Thr-64 is subject to Phosphothreonine.

This sequence belongs to the globin family. In terms of assembly, monomeric.

It localises to the cytoplasm. The protein localises to the sarcoplasm. It catalyses the reaction Fe(III)-heme b-[protein] + nitric oxide + H2O = Fe(II)-heme b-[protein] + nitrite + 2 H(+). It carries out the reaction H2O2 + AH2 = A + 2 H2O. Functionally, monomeric heme protein which primary function is to store oxygen and facilitate its diffusion within muscle tissues. Reversibly binds oxygen through a pentacoordinated heme iron and enables its timely and efficient release as needed during periods of heightened demand. Depending on the oxidative conditions of tissues and cells, and in addition to its ability to bind oxygen, it also has a nitrite reductase activity whereby it regulates the production of bioactive nitric oxide. Under stress conditions, like hypoxia and anoxia, it also protects cells against reactive oxygen species thanks to its pseudoperoxidase activity. This Ailuropoda melanoleuca (Giant panda) protein is Myoglobin (MB).